The primary structure comprises 166 residues: UBA-like domain-containing protein 2-A (166 aa).

Positions 120 to 166 are disordered; the sequence is QQPVWLPPASPTTHLHHHHHHPQPVWPPNSQPTGGPQKAMAAMDGQR.

The protein belongs to the UBALD family.

The protein is UBA-like domain-containing protein 2-A (ubald2-a) of Xenopus laevis (African clawed frog).